We begin with the raw amino-acid sequence, 93 residues long: MARSLKKGPFVDDHVMKKVIAAKKANDNKPIKTWSRRSTITPDMIGLTFNVHNGKSFIPVYITENHIGYKLGEFAPTRTFKGHKGSVQKKIGK.

It belongs to the universal ribosomal protein uS19 family.

Protein S19 forms a complex with S13 that binds strongly to the 16S ribosomal RNA. The chain is Small ribosomal subunit protein uS19 from Campylobacter jejuni subsp. jejuni serotype O:6 (strain 81116 / NCTC 11828).